A 386-amino-acid polypeptide reads, in one-letter code: Succinate--CoA ligase [ADP-forming] subunit beta (386 aa).

In terms of domain architecture, ATP-grasp spans 9 to 244; it reads KALFREHGIP…ETQEDAREAR (236 aa). Residues Lys46, 53 to 55, Glu99, Thr102, and Glu107 each bind ATP; that span reads GRG. Mg(2+) is bound by residues Asn199 and Asp213. Residues Asn264 and 321–323 contribute to the substrate site; that span reads GIV.

This sequence belongs to the succinate/malate CoA ligase beta subunit family. In terms of assembly, heterotetramer of two alpha and two beta subunits. It depends on Mg(2+) as a cofactor.

It carries out the reaction succinate + ATP + CoA = succinyl-CoA + ADP + phosphate. The catalysed reaction is GTP + succinate + CoA = succinyl-CoA + GDP + phosphate. It participates in carbohydrate metabolism; tricarboxylic acid cycle; succinate from succinyl-CoA (ligase route): step 1/1. Succinyl-CoA synthetase functions in the citric acid cycle (TCA), coupling the hydrolysis of succinyl-CoA to the synthesis of either ATP or GTP and thus represents the only step of substrate-level phosphorylation in the TCA. The beta subunit provides nucleotide specificity of the enzyme and binds the substrate succinate, while the binding sites for coenzyme A and phosphate are found in the alpha subunit. This Thioalkalivibrio sulfidiphilus (strain HL-EbGR7) protein is Succinate--CoA ligase [ADP-forming] subunit beta.